We begin with the raw amino-acid sequence, 201 residues long: Small ribosomal subunit protein uS4c (201 aa).

The interval 15-44 (LGALPGLTSKRPRSGSDLRNQSRSGKKSQY) is disordered. An S4 RNA-binding domain is found at 89 to 150 (MRLDNILFRL…EQRSRALIQN (62 aa)).

Belongs to the universal ribosomal protein uS4 family. As to quaternary structure, part of the 30S ribosomal subunit. Contacts protein S5. The interaction surface between S4 and S5 is involved in control of translational fidelity.

The protein resides in the plastid. Its subcellular location is the chloroplast. Functionally, one of the primary rRNA binding proteins, it binds directly to 16S rRNA where it nucleates assembly of the body of the 30S subunit. Its function is as follows. With S5 and S12 plays an important role in translational accuracy. The polypeptide is Small ribosomal subunit protein uS4c (rps4) (Calycanthus floridus var. glaucus (Eastern sweetshrub)).